The following is a 763-amino-acid chain: Fibroblast growth factor receptor (763 aa).

Residues 1–27 form the signal peptide; the sequence is MKEFEVKVASTAFVLVLFSLTINQILA. Residues 28–291 lie on the Extracellular side of the membrane; that stretch reads SETSTKFRSP…ITKGIPNETN (264 aa). Residues 34–74 form a disordered region; that stretch reads FRSPVPAPTVPDWNHLPNEGNEENVVSAPKQDGASGGQKPY. 2 Ig-like C2-type domains span residues 73-164 and 173-270; these read PYWT…YQLD and PILA…AWLS. Residues C98 and C148 are joined by a disulfide bond. N-linked (GlcNAc...) asparagine glycosylation is found at N158, N182, N220, N230, N243, and N288. Residues C195 and C254 are joined by a disulfide bond. A helical membrane pass occupies residues 292–312; it reads IIIYVMCGVLVILFGLAVVLV. Residues 313-763 are Cytoplasmic-facing; that stretch reads LYYHCYNGKD…NEHARLRSEA (451 aa). The region spanning 382-672 is the Protein kinase domain; sequence ITLVERLDEG…TLVEDLDRML (291 aa). ATP contacts are provided by residues 388–396 and K417; that span reads LDEGFFGQV. The active-site Proton acceptor is D537. Y568 is subject to Phosphotyrosine; by autocatalysis. Residues 691 to 711 show a composition bias toward acidic residues; sequence YSESSEDESESQNSDEEDDDS. The tract at residues 691–742 is disordered; sequence YSESSEDESESQNSDEEDDDSVFERMRQIDSLSNGNIPFNEEDSSNSDPYVA.

Belongs to the protein kinase superfamily. Tyr protein kinase family. Fibroblast growth factor receptor subfamily.

The protein resides in the membrane. The enzyme catalyses L-tyrosyl-[protein] + ATP = O-phospho-L-tyrosyl-[protein] + ADP + H(+). Its function is as follows. Receptor for basic fibroblast growth factor. The polypeptide is Fibroblast growth factor receptor (FGFR) (Halocynthia roretzi (Sea squirt)).